A 244-amino-acid polypeptide reads, in one-letter code: 5-oxoprolinase subunit A (244 aa).

Belongs to the LamB/PxpA family. In terms of assembly, forms a complex composed of PxpA, PxpB and PxpC.

It carries out the reaction 5-oxo-L-proline + ATP + 2 H2O = L-glutamate + ADP + phosphate + H(+). In terms of biological role, catalyzes the cleavage of 5-oxoproline to form L-glutamate coupled to the hydrolysis of ATP to ADP and inorganic phosphate. In Escherichia coli O6:K15:H31 (strain 536 / UPEC), this protein is 5-oxoprolinase subunit A.